A 100-amino-acid polypeptide reads, in one-letter code: Integration host factor subunit beta (100 aa).

The interval 53-100 (LHHRPPRIGRNPKTGEPVALPGKYVPHFKPGKELRDRVNAGRHNPIQS) is disordered. A compositionally biased stretch (basic and acidic residues) spans 82 to 91 (PGKELRDRVN).

This sequence belongs to the bacterial histone-like protein family. Heterodimer of an alpha and a beta chain.

Functionally, this protein is one of the two subunits of integration host factor, a specific DNA-binding protein that functions in genetic recombination as well as in transcriptional and translational control. This chain is Integration host factor subunit beta, found in Alkalilimnicola ehrlichii (strain ATCC BAA-1101 / DSM 17681 / MLHE-1).